The sequence spans 209 residues: Thymidylate kinase (209 aa).

10–17 (GLDGAGKS) contributes to the ATP binding site.

The protein belongs to the thymidylate kinase family.

The enzyme catalyses dTMP + ATP = dTDP + ADP. In terms of biological role, phosphorylation of dTMP to form dTDP in both de novo and salvage pathways of dTTP synthesis. The protein is Thymidylate kinase of Francisella tularensis subsp. holarctica (strain FTNF002-00 / FTA).